A 321-amino-acid polypeptide reads, in one-letter code: tRNA pseudouridine synthase B (321 aa).

Asp47 serves as the catalytic Nucleophile.

The protein belongs to the pseudouridine synthase TruB family. Type 1 subfamily.

The enzyme catalyses uridine(55) in tRNA = pseudouridine(55) in tRNA. Responsible for synthesis of pseudouridine from uracil-55 in the psi GC loop of transfer RNAs. This is tRNA pseudouridine synthase B from Shewanella baltica (strain OS185).